The chain runs to 396 residues: Elongation factor Tu (396 aa).

A tr-type G domain is found at 10–206 (KPHVNVGTIG…ALDSYIPTPE (197 aa)). The segment at 19-26 (GHVDHGKT) is G1. 19 to 26 (GHVDHGKT) is a binding site for GTP. A Mg(2+)-binding site is contributed by threonine 26. Residues 60–64 (GITIN) are G2. The segment at 81 to 84 (DCPG) is G3. Residues 81 to 85 (DCPGH) and 136 to 139 (NKCD) contribute to the GTP site. A G4 region spans residues 136–139 (NKCD). Positions 174 to 176 (SAK) are G5.

The protein belongs to the TRAFAC class translation factor GTPase superfamily. Classic translation factor GTPase family. EF-Tu/EF-1A subfamily. Monomer.

Its subcellular location is the cytoplasm. It catalyses the reaction GTP + H2O = GDP + phosphate + H(+). In terms of biological role, GTP hydrolase that promotes the GTP-dependent binding of aminoacyl-tRNA to the A-site of ribosomes during protein biosynthesis. The polypeptide is Elongation factor Tu (Methylibium petroleiphilum (strain ATCC BAA-1232 / LMG 22953 / PM1)).